A 377-amino-acid polypeptide reads, in one-letter code: Putative holocytochrome-c synthase (377 aa).

Disordered stretches follow at residues 1-29 and 111-136; these read MTSS…SNEA and QNSE…KPAG. Positions 7–22 are enriched in basic and acidic residues; it reads TTDHPRTGKCPIDHSK. HRM repeat units lie at residues 114-119 and 124-129; these read EATPAV and TCPMSN.

Belongs to the cytochrome c-type heme lyase family.

It is found in the mitochondrion inner membrane. The protein resides in the mitochondrion intermembrane space. It catalyses the reaction holo-[cytochrome c] = apo-[cytochrome c] + heme b. Functionally, lyase that catalyzes the covalent linking of the heme group to the cytochrome C apoprotein to produce the mature functional cytochrome. This is Putative holocytochrome-c synthase from Schizosaccharomyces pombe (strain 972 / ATCC 24843) (Fission yeast).